The chain runs to 31 residues: Nemertide alpha-2 (31 aa).

3 disulfide bridges follow: Cys-2–Cys-16, Cys-9–Cys-20, and Cys-15–Cys-26. 2 positions are modified to 4-hydroxyproline: Pro-28 and Pro-29.

The protein belongs to the nemertide family. Confined to the epidermis and to the mucus layer.

It localises to the secreted. Functionally, toxin with similar potency against both insect and mammalian sodium channels (Nav). Delays the inactivation of most Nav channels tested (B.germanica (BgNav1); EC(50)=87.2 nM, human Nav1.1/SCN1A; EC(50)=125.8 nM, rat Nav1.2/SCN2A; EC(50)=97.9 nM, rat Nav1.3/SCN3A; EC(50)=127.7 nM, rat Nav1.4/SCN4A; EC(50)=1150.3 nM, human Nav1.5/SCN5A; EC(50)=149.2 nM, mouse Nav1.6/SCN8A; EC(50)=1361.8 nM, human Nav1.9/SCN9A; EC(50)=1296.7 nM). Inactivation is completely prevented by a concentration of 1 uM, resulting in sustained, non-inactivating current. In addition, the toxin significantly enhances the recovery from inactivation, and the open state is not required for the toxin to interact with the channel. In vivo, injection into brine shrimp (Artemia salina) stops movement or causes death after 24 hours (EC(50)=2.9 uM). This chain is Nemertide alpha-2, found in Lineus longissimus (Bootlace worm).